The sequence spans 708 residues: Polyribonucleotide nucleotidyltransferase (708 aa).

Mg(2+) is bound by residues D488 and D494. The KH domain maps to 555-614 (PRIYTMKIPQKKIAEVIGKGGATIRQLTEETGTTIEIGDDGTIKIAATDGESAANAISRI). An S1 motif domain is found at 624–692 (GTIYEGKVVR…RQGRVRLSIK (69 aa)).

This sequence belongs to the polyribonucleotide nucleotidyltransferase family. As to quaternary structure, component of the RNA degradosome, which is a multiprotein complex involved in RNA processing and mRNA degradation. Mg(2+) is required as a cofactor.

It localises to the cytoplasm. The enzyme catalyses RNA(n+1) + phosphate = RNA(n) + a ribonucleoside 5'-diphosphate. Its function is as follows. Involved in mRNA degradation. Catalyzes the phosphorolysis of single-stranded polyribonucleotides processively in the 3'- to 5'-direction. This chain is Polyribonucleotide nucleotidyltransferase, found in Pseudoalteromonas translucida (strain TAC 125).